The chain runs to 291 residues: Glycine--tRNA ligase alpha subunit (291 aa).

It belongs to the class-II aminoacyl-tRNA synthetase family. In terms of assembly, tetramer of two alpha and two beta subunits.

It is found in the cytoplasm. The enzyme catalyses tRNA(Gly) + glycine + ATP = glycyl-tRNA(Gly) + AMP + diphosphate. This is Glycine--tRNA ligase alpha subunit from Geotalea uraniireducens (strain Rf4) (Geobacter uraniireducens).